An 880-amino-acid chain; its full sequence is Leucine--tRNA ligase (880 aa).

Residues 46–56 (PYPSGALHMGH) carry the 'HIGH' region motif. The short motif at 638–642 (KMSKS) is the 'KMSKS' region element. Lys-641 serves as a coordination point for ATP.

Belongs to the class-I aminoacyl-tRNA synthetase family.

The protein resides in the cytoplasm. It catalyses the reaction tRNA(Leu) + L-leucine + ATP = L-leucyl-tRNA(Leu) + AMP + diphosphate. This chain is Leucine--tRNA ligase, found in Xanthomonas euvesicatoria pv. vesicatoria (strain 85-10) (Xanthomonas campestris pv. vesicatoria).